A 946-amino-acid chain; its full sequence is Villin-4 (946 aa).

4 Gelsolin-like repeats span residues 28 to 109 (NFKP…ETEK), 152 to 219 (VHVK…EDGK), 274 to 339 (LEHE…TIMF), and 641 to 715 (EIHH…PQFF). Disordered regions lie at residues 744–789 (ATPS…GRSP), 801–832 (PSTRYLSTPPPAVKKLFPRSGGSELPKTSSKQ), and 844–902 (GPTK…PAPD). Residues 765 to 777 (QDKSQQRTRSMSH) show a composition bias toward polar residues. Positions 874–883 (SENEPEDDEN) are enriched in acidic residues. The region spanning 881–946 (DENSTIYPYE…NRLKSDLQLF (66 aa)) is the HP domain.

This sequence belongs to the villin/gelsolin family.

The protein resides in the cytoplasm. It localises to the cytoskeleton. Functionally, ca(2+)-regulated actin-binding protein. Binds actin microfilaments (MFs). Involved in actin filament bundling, severing and capping. Caps the barbed end of actin filaments and is able to sever them in a calcium-dependent manner. The protein is Villin-4 of Oryza sativa subsp. japonica (Rice).